The primary structure comprises 354 residues: MPTSFPELDLENFEYDDSAEACYLGDIVAFGTIFLSIFYSLVFTFGLVGNLLVVLALTNSRKSKSITDIYLLNLALSDLLFVATLPFWTHYLISHEGLHNAMCKLTTAFFFIGFFGGIFFITVISIDRYLAIVLAANSMNNRTVQHGVTISLGVWAAAILVASPQFMFTKRKDNECLGDYPEVLQEIWPVLRNSEVNILGFVLPLLIMSFCYFRIVRTLFSCKNRKKARAIRLILLVVVVFFLFWTPYNIVIFLETLKFYNFFPSCGMKRDLRWALSVTETVAFSHCCLNPFIYAFAGEKFRRYLRHLYNKCLAVLCGRPVHAGFSTESQRSRQDSILSSLTHYTSEGEGSLLL.

Topologically, residues 1-32 (MPTSFPELDLENFEYDDSAEACYLGDIVAFGT) are extracellular. A helical transmembrane segment spans residues 33–60 (IFLSIFYSLVFTFGLVGNLLVVLALTNS). Residues 61-70 (RKSKSITDIY) lie on the Cytoplasmic side of the membrane. The helical transmembrane segment at 71-91 (LLNLALSDLLFVATLPFWTHY) threads the bilayer. The Extracellular portion of the chain corresponds to 92–104 (LISHEGLHNAMCK). C103 and C176 form a disulfide bridge. A helical transmembrane segment spans residues 105-126 (LTTAFFFIGFFGGIFFITVISI). Residues 127–143 (DRYLAIVLAANSMNNRT) lie on the Cytoplasmic side of the membrane. Residues 144–168 (VQHGVTISLGVWAAAILVASPQFMF) form a helical membrane-spanning segment. Over 169–196 (TKRKDNECLGDYPEVLQEIWPVLRNSEV) the chain is Extracellular. The helical transmembrane segment at 197-216 (NILGFVLPLLIMSFCYFRIV) threads the bilayer. Residues 217–232 (RTLFSCKNRKKARAIR) lie on the Cytoplasmic side of the membrane. Residues 233–257 (LILLVVVVFFLFWTPYNIVIFLETL) form a helical membrane-spanning segment. Residues 258 to 274 (KFYNFFPSCGMKRDLRW) are Extracellular-facing. A helical membrane pass occupies residues 275–298 (ALSVTETVAFSHCCLNPFIYAFAG). At 299–354 (EKFRRYLRHLYNKCLAVLCGRPVHAGFSTESQRSRQDSILSSLTHYTSEGEGSLLL) the chain is on the cytoplasmic side. T345 is modified (phosphothreonine).

This sequence belongs to the G-protein coupled receptor 1 family. Found in a ternary complex with CX3CL1 and ITGAV:ITGB3 or ITGA4:ITGB1. In terms of processing, this protein is not N-glycosylated which is unusual for G-protein-coupled receptors. Most abundant in adult spinal cord, brain, kidney, gut, uterus and testes.

The protein localises to the cell membrane. Functionally, receptor for the C-X3-C chemokine fractalkine (CX3CL1) present on many early leukocyte cells; CX3CR1-CX3CL1 signaling exerts distinct functions in different tissue compartments, such as immune response, inflammation, cell adhesion and chemotaxis. CX3CR1-CX3CL1 signaling mediates cell migratory functions. Responsible for the recruitment of natural killer (NK) cells to inflamed tissues. Acts as a regulator of inflammation process leading to atherogenesis by mediating macrophage and monocyte recruitment to inflamed atherosclerotic plaques, promoting cell survival. Involved in airway inflammation by promoting interleukin 2-producing T helper (Th2) cell survival in inflamed lung. Involved in the migration of circulating monocytes to non-inflamed tissues, where they differentiate into macrophages and dendritic cells. Acts as a negative regulator of angiogenesis, probably by promoting macrophage chemotaxis. Plays a key role in brain microglia by regulating inflammatory response in the central nervous system (CNS) and regulating synapse maturation. Required to restrain the microglial inflammatory response in the CNS and the resulting parenchymal damage in response to pathological stimuli. Involved in brain development by participating in synaptic pruning, a natural process during which brain microglia eliminates extra synapses during postnatal development. Synaptic pruning by microglia is required to promote the maturation of circuit connectivity during brain development. Acts as an important regulator of the gut microbiota by controlling immunity to intestinal bacteria and fungi. Expressed in lamina propria dendritic cells in the small intestine, which form transepithelial dendrites capable of taking up bacteria in order to provide defense against pathogenic bacteria. Required to initiate innate and adaptive immune responses against dissemination of commensal fungi (mycobiota) component of the gut: expressed in mononuclear phagocytes (MNPs) and acts by promoting induction of antifungal IgG antibodies response to confer protection against disseminated C.albicans or C.auris infection. Also acts as a receptor for C-C motif chemokine CCL26, inducing cell chemotaxis. The chain is CX3C chemokine receptor 1 from Rattus norvegicus (Rat).